Reading from the N-terminus, the 162-residue chain is Ribosome maturation factor RimP (162 aa).

It belongs to the RimP family.

The protein resides in the cytoplasm. Functionally, required for maturation of 30S ribosomal subunits. This chain is Ribosome maturation factor RimP, found in Cupriavidus pinatubonensis (strain JMP 134 / LMG 1197) (Cupriavidus necator (strain JMP 134)).